The following is a 584-amino-acid chain: Arginine--tRNA ligase (584 aa).

Positions 126–136 (PNIAKEMHVGH) match the 'HIGH' region motif.

The protein belongs to the class-I aminoacyl-tRNA synthetase family. As to quaternary structure, monomer.

The protein resides in the cytoplasm. The catalysed reaction is tRNA(Arg) + L-arginine + ATP = L-arginyl-tRNA(Arg) + AMP + diphosphate. The chain is Arginine--tRNA ligase from Nostoc punctiforme (strain ATCC 29133 / PCC 73102).